The primary structure comprises 162 residues: uncharacterized protein (162 aa).

5 consecutive transmembrane segments (helical) span residues Thr-15–Leu-40, Ile-47–Leu-66, Tyr-76–Tyr-98, Lys-105–Leu-124, and Gly-128–Ile-150.

The protein localises to the cell membrane. This is an uncharacterized protein from Archaeoglobus fulgidus (strain ATCC 49558 / DSM 4304 / JCM 9628 / NBRC 100126 / VC-16).